The sequence spans 70 residues: Large ribosomal subunit protein uL29 (70 aa).

The protein belongs to the universal ribosomal protein uL29 family.

The chain is Large ribosomal subunit protein uL29 from Thermosynechococcus vestitus (strain NIES-2133 / IAM M-273 / BP-1).